The following is a 245-amino-acid chain: Carboxymethylenebutenolidase homolog (245 aa).

Position 2 is an N-acetylalanine (A2). Residues C132, D179, and H212 contribute to the active site. The residue at position 223 (S223) is a Phosphoserine.

It belongs to the dienelactone hydrolase family.

It localises to the cytoplasm. It is found in the cytosol. Its function is as follows. Cysteine hydrolase. This is Carboxymethylenebutenolidase homolog (Cmbl) from Mus musculus (Mouse).